The chain runs to 461 residues: Major capsid protein (461 aa).

The segment covering 1 to 18 (MSTPTISADTTAQNATST) has biased composition (polar residues). Residues 1-22 (MSTPTISADTTAQNATSTEVRE) are disordered.

It is found in the virion. Its function is as follows. Major protein of the capsid. This chain is Major capsid protein (MCP), found in Spodoptera frugiperda ascovirus 1a (SfAV-1a).